Reading from the N-terminus, the 561-residue chain is NADH-quinone oxidoreductase subunit C/D (561 aa).

The segment at Met-1–Leu-152 is NADH dehydrogenase I subunit C. An NADH dehydrogenase I subunit D region spans residues Lys-176 to Arg-561.

This sequence in the N-terminal section; belongs to the complex I 30 kDa subunit family. In the C-terminal section; belongs to the complex I 49 kDa subunit family. In terms of assembly, NDH-1 is composed of 13 different subunits. Subunits NuoB, CD, E, F, and G constitute the peripheral sector of the complex.

It is found in the cell inner membrane. It carries out the reaction a quinone + NADH + 5 H(+)(in) = a quinol + NAD(+) + 4 H(+)(out). Functionally, NDH-1 shuttles electrons from NADH, via FMN and iron-sulfur (Fe-S) centers, to quinones in the respiratory chain. The immediate electron acceptor for the enzyme in this species is believed to be ubiquinone. Couples the redox reaction to proton translocation (for every two electrons transferred, four hydrogen ions are translocated across the cytoplasmic membrane), and thus conserves the redox energy in a proton gradient. This Campylobacter fetus subsp. fetus (strain 82-40) protein is NADH-quinone oxidoreductase subunit C/D.